The chain runs to 791 residues: 1-phosphatidylinositol 4,5-bisphosphate phosphodiesterase delta-4 (791 aa).

Positions 16-124 (LLMQKGTMMR…WMQGLQLLVG (109 aa)) constitute a PH domain. The interval 26 to 53 (KVRSKSWKKLRFFRLQDDGMTVWHARQA) is substrate binding. EF-hand domains follow at residues 134–169 (RLDQ…MNVE), 170–205 (MDQE…LTQR), and 207–237 (EVQE…EQKE). Ca(2+) contacts are provided by Asp-147, Asn-149, Asp-151, Arg-153, Glu-158, Asp-183, Ser-185, Ser-187, Thr-189, and Glu-194. A GBA motif is present at residues 213 to 243 (EKFSSDGQKLTLLEFVDFLQEEQKEGERASD). A PI-PLC X-box domain is found at 290 to 435 (QDMTQPLNHY…LRGKILVKGK (146 aa)). Residue His-305 is part of the active site. Ca(2+) contacts are provided by Asn-306, Glu-335, and Asp-337. Residue His-350 is part of the active site. Glu-384 serves as a coordination point for Ca(2+). Residues Lys-433, Lys-435, Ser-551, and Arg-578 each contribute to the substrate site. The PI-PLC Y-box domain occupies 522-638 (LSALVVYLKA…GYVLKPDFLR (117 aa)). In terms of domain architecture, C2 spans 638 to 765 (RDAQSSFHPE…QGYRHIHLLS (128 aa)). Ca(2+) contacts are provided by Ile-679, Asp-681, Asn-705, Asp-734, Tyr-735, and Asp-736. The PDZ-binding signature appears at 760–763 (HIHL).

Interacts with GRIP1. Interacts (via GBA motif) with guanine nucleotide-binding protein G(i) alpha subunit GNAI3 (inactive GDP-bound form); low-affinity interaction. The cofactor is Ca(2+).

The protein resides in the membrane. The protein localises to the nucleus. It is found in the cytoplasm. It localises to the endoplasmic reticulum. It catalyses the reaction a 1,2-diacyl-sn-glycero-3-phospho-(1D-myo-inositol-4,5-bisphosphate) + H2O = 1D-myo-inositol 1,4,5-trisphosphate + a 1,2-diacyl-sn-glycerol + H(+). The catalysed reaction is a 1,2-diacyl-sn-glycero-3-phospho-(1D-myo-inositol) + H2O = 1D-myo-inositol 1-phosphate + a 1,2-diacyl-sn-glycerol + H(+). Functionally, hydrolyzes the phosphatidylinositol 4,5-bisphosphate (PIP2) to generate 2 second messenger molecules diacylglycerol (DAG) and inositol 1,4,5-trisphosphate (IP3). DAG mediates the activation of protein kinase C (PKC), while IP3 releases Ca(2+) from intracellular stores. Required for acrosome reaction in sperm during fertilization, probably by acting as an important enzyme for intracellular Ca(2+) mobilization in the zona pellucida-induced acrosome reaction. May play a role in cell growth. Modulates the liver regeneration in cooperation with nuclear PKC. Overexpression up-regulates the Erk signaling pathway and proliferation. This is 1-phosphatidylinositol 4,5-bisphosphate phosphodiesterase delta-4 (PLCD4) from Bos taurus (Bovine).